A 312-amino-acid polypeptide reads, in one-letter code: Formimidoylglutamase (312 aa).

Mn(2+) is bound by residues H123, D152, H154, D156, C243, and D245.

The protein belongs to the arginase family. Mn(2+) is required as a cofactor.

It catalyses the reaction N-formimidoyl-L-glutamate + H2O = formamide + L-glutamate. It participates in amino-acid degradation; L-histidine degradation into L-glutamate; L-glutamate from N-formimidoyl-L-glutamate (hydrolase route): step 1/1. Functionally, catalyzes the conversion of N-formimidoyl-L-glutamate to L-glutamate and formamide. The sequence is that of Formimidoylglutamase from Pseudomonas fluorescens (strain ATCC BAA-477 / NRRL B-23932 / Pf-5).